Reading from the N-terminus, the 283-residue chain is ATP phosphoribosyltransferase (283 aa).

The protein belongs to the ATP phosphoribosyltransferase family. Long subfamily. Mg(2+) is required as a cofactor.

The protein resides in the cytoplasm. The enzyme catalyses 1-(5-phospho-beta-D-ribosyl)-ATP + diphosphate = 5-phospho-alpha-D-ribose 1-diphosphate + ATP. The protein operates within amino-acid biosynthesis; L-histidine biosynthesis; L-histidine from 5-phospho-alpha-D-ribose 1-diphosphate: step 1/9. Its activity is regulated as follows. Feedback inhibited by histidine. Its function is as follows. Catalyzes the condensation of ATP and 5-phosphoribose 1-diphosphate to form N'-(5'-phosphoribosyl)-ATP (PR-ATP). Has a crucial role in the pathway because the rate of histidine biosynthesis seems to be controlled primarily by regulation of HisG enzymatic activity. The chain is ATP phosphoribosyltransferase from Nocardia farcinica (strain IFM 10152).